The primary structure comprises 211 residues: HTH-type transcriptional repressor FabR (211 aa).

The HTH tetR-type domain maps to 10–70 (RTRRSLVEAA…TMVDESGLML (61 aa)). Positions 33–52 (SLREVAREAGIAPTSFYRHF) form a DNA-binding region, H-T-H motif.

In terms of assembly, homodimer.

The protein localises to the cytoplasm. Functionally, represses the transcription of fabB, involved in unsaturated fatty acid (UFA) biosynthesis. By controlling UFA production, FabR directly influences the physical properties of the membrane bilayer. The protein is HTH-type transcriptional repressor FabR of Cronobacter sakazakii (strain ATCC BAA-894) (Enterobacter sakazakii).